The chain runs to 506 residues: NADH-quinone oxidoreductase subunit N (506 aa).

14 helical membrane-spanning segments follow: residues 14–34 (MVPE…DLFF), 40–60 (YVAL…ITLY), 72–92 (FVLD…AALI), 109–129 (GEYY…ASSV), 131–151 (FVTL…LVGI), 166–186 (VING…LYGI), 209–229 (LLLA…IATV), 256–276 (MAGF…VSVQ), 286–306 (MSIY…VVAL), 314–334 (LFAY…VALS), 343–363 (FYML…HGLI), 385–405 (AIVM…AGFI), 420–440 (AHYV…VYYF), and 465–485 (IVMS…MIGY).

This sequence belongs to the complex I subunit 2 family. NDH-1 is composed of 14 different subunits. Subunits NuoA, H, J, K, L, M, N constitute the membrane sector of the complex.

Its subcellular location is the cell membrane. The enzyme catalyses a quinone + NADH + 5 H(+)(in) = a quinol + NAD(+) + 4 H(+)(out). In terms of biological role, NDH-1 shuttles electrons from NADH, via FMN and iron-sulfur (Fe-S) centers, to quinones in the respiratory chain. The immediate electron acceptor for the enzyme in this species is believed to be a menaquinone. Couples the redox reaction to proton translocation (for every two electrons transferred, four hydrogen ions are translocated across the cytoplasmic membrane), and thus conserves the redox energy in a proton gradient. In Bacillus anthracis, this protein is NADH-quinone oxidoreductase subunit N.